Here is a 160-residue protein sequence, read N- to C-terminus: Cytochrome c-type biogenesis protein CcmE (160 aa).

At methionine 1–arginine 8 the chain is on the cytoplasmic side. Residues leucine 9–alanine 29 form a helical; Signal-anchor for type II membrane protein membrane-spanning segment. Residues leucine 30–glutamine 160 are Periplasmic-facing. 2 residues coordinate heme: histidine 130 and tyrosine 134.

This sequence belongs to the CcmE/CycJ family.

The protein resides in the cell inner membrane. Functionally, heme chaperone required for the biogenesis of c-type cytochromes. Transiently binds heme delivered by CcmC and transfers the heme to apo-cytochromes in a process facilitated by CcmF and CcmH. This Idiomarina loihiensis (strain ATCC BAA-735 / DSM 15497 / L2-TR) protein is Cytochrome c-type biogenesis protein CcmE.